We begin with the raw amino-acid sequence, 725 residues long: Ribosomal RNA large subunit methyltransferase K/L (725 aa).

The region spanning 46–157 (VGYRLCLWSR…KGQAVLSLDL (112 aa)) is the THUMP domain.

This sequence belongs to the methyltransferase superfamily. RlmKL family.

The protein resides in the cytoplasm. It carries out the reaction guanosine(2445) in 23S rRNA + S-adenosyl-L-methionine = N(2)-methylguanosine(2445) in 23S rRNA + S-adenosyl-L-homocysteine + H(+). The enzyme catalyses guanosine(2069) in 23S rRNA + S-adenosyl-L-methionine = N(2)-methylguanosine(2069) in 23S rRNA + S-adenosyl-L-homocysteine + H(+). In terms of biological role, specifically methylates the guanine in position 2445 (m2G2445) and the guanine in position 2069 (m7G2069) of 23S rRNA. In Stutzerimonas stutzeri (strain A1501) (Pseudomonas stutzeri), this protein is Ribosomal RNA large subunit methyltransferase K/L.